Reading from the N-terminus, the 116-residue chain is Large ribosomal subunit protein bL20 (116 aa).

The protein belongs to the bacterial ribosomal protein bL20 family.

Functionally, binds directly to 23S ribosomal RNA and is necessary for the in vitro assembly process of the 50S ribosomal subunit. It is not involved in the protein synthesizing functions of that subunit. The polypeptide is Large ribosomal subunit protein bL20 (rplT) (Helicobacter pylori (strain ATCC 700392 / 26695) (Campylobacter pylori)).